Reading from the N-terminus, the 743-residue chain is Putative pre-mRNA-splicing factor ATP-dependent RNA helicase DHX32 (743 aa).

N-acetylmethionine is present on Met-1. A disordered region spans residues 1–28; sequence MEEEGLECPNSSSEKRYFPESLDSSDGD. The 167-residue stretch at 72-238 folds into the Helicase ATP-binding domain; sequence MENLLQNQIV…YGNVPVIEVK (167 aa). 85–92 is a binding site for ATP; it reads GDAKCGKS. The short motif at 185–188 is the DEAH box element; it reads DDIH.

Belongs to the DEAD box helicase family. DEAH subfamily. As to expression, expressed in lymphoid tissues (at protein level). Expressed in brain, heart, skeletal muscle, colon, thymus, spleen, kidney, liver, small intestine, placenta, lung, lymphoid tissues and blood leukocytes.

It localises to the nucleus. It is found in the mitochondrion. It carries out the reaction ATP + H2O = ADP + phosphate + H(+). The chain is Putative pre-mRNA-splicing factor ATP-dependent RNA helicase DHX32 (DHX32) from Homo sapiens (Human).